The chain runs to 189 residues: Small ribosomal subunit protein uS7 (189 aa).

This sequence belongs to the universal ribosomal protein uS7 family. As to quaternary structure, part of the 30S ribosomal subunit.

Its function is as follows. One of the primary rRNA binding proteins, it binds directly to 16S rRNA where it nucleates assembly of the head domain of the 30S subunit. Is located at the subunit interface close to the decoding center. This Methanosarcina mazei (strain ATCC BAA-159 / DSM 3647 / Goe1 / Go1 / JCM 11833 / OCM 88) (Methanosarcina frisia) protein is Small ribosomal subunit protein uS7.